Reading from the N-terminus, the 258-residue chain is Hydroxyacylglutathione hydrolase (258 aa).

7 residues coordinate Zn(2+): histidine 56, histidine 58, aspartate 60, histidine 61, histidine 112, aspartate 132, and histidine 170.

The protein belongs to the metallo-beta-lactamase superfamily. Glyoxalase II family. In terms of assembly, monomer. It depends on Zn(2+) as a cofactor.

It catalyses the reaction an S-(2-hydroxyacyl)glutathione + H2O = a 2-hydroxy carboxylate + glutathione + H(+). Its pathway is secondary metabolite metabolism; methylglyoxal degradation; (R)-lactate from methylglyoxal: step 2/2. Functionally, thiolesterase that catalyzes the hydrolysis of S-D-lactoyl-glutathione to form glutathione and D-lactic acid. In Pseudomonas paraeruginosa (strain DSM 24068 / PA7) (Pseudomonas aeruginosa (strain PA7)), this protein is Hydroxyacylglutathione hydrolase.